We begin with the raw amino-acid sequence, 259 residues long: Pyrroloquinoline-quinone synthase (259 aa).

The protein belongs to the PqqC family.

The catalysed reaction is 6-(2-amino-2-carboxyethyl)-7,8-dioxo-1,2,3,4,7,8-hexahydroquinoline-2,4-dicarboxylate + 3 O2 = pyrroloquinoline quinone + 2 H2O2 + 2 H2O + H(+). It functions in the pathway cofactor biosynthesis; pyrroloquinoline quinone biosynthesis. Its function is as follows. Ring cyclization and eight-electron oxidation of 3a-(2-amino-2-carboxyethyl)-4,5-dioxo-4,5,6,7,8,9-hexahydroquinoline-7,9-dicarboxylic-acid to PQQ. This chain is Pyrroloquinoline-quinone synthase, found in Bradyrhizobium diazoefficiens (strain JCM 10833 / BCRC 13528 / IAM 13628 / NBRC 14792 / USDA 110).